The following is a 295-amino-acid chain: Acetylglutamate kinase (295 aa).

Residues 61–62, Arg83, and Asn182 contribute to the substrate site; that span reads GG.

This sequence belongs to the acetylglutamate kinase family. ArgB subfamily.

It localises to the cytoplasm. It catalyses the reaction N-acetyl-L-glutamate + ATP = N-acetyl-L-glutamyl 5-phosphate + ADP. The protein operates within amino-acid biosynthesis; L-arginine biosynthesis; N(2)-acetyl-L-ornithine from L-glutamate: step 2/4. Catalyzes the ATP-dependent phosphorylation of N-acetyl-L-glutamate. In Clostridium acetobutylicum (strain ATCC 824 / DSM 792 / JCM 1419 / IAM 19013 / LMG 5710 / NBRC 13948 / NRRL B-527 / VKM B-1787 / 2291 / W), this protein is Acetylglutamate kinase.